A 406-amino-acid chain; its full sequence is NIPA-like protein 3 (406 aa).

4 helical membrane-spanning segments follow: residues 33 to 53 (NLIGALLAIFGHLVVSIALNL), 76 to 96 (WWLGLFLMLLGELGVFASYAF), 101 to 121 (LIVPLSAVSVIASAIIGIIFI), and 135 to 155 (ILSFVGCGLAVVGTYLLVTFA). N-linked (GlcNAc...) asparagine glycosylation is present at N166. A run of 5 helical transmembrane segments spans residues 171-191 (LVSWPFLLYMLVEIILFCLLL), 202-222 (IVVILLLVALLGSMTVVTVKA), 240-260 (PIFYVMFVCMVATAVYQAAFL), 271-291 (LIASVGYILSTTIAITAGAIF), and 300-320 (VLHICMFALGCLIAFLGVFLI). The residue at position 372 (S372) is a Phosphoserine.

Belongs to the NIPA family.

The protein resides in the membrane. This is NIPA-like protein 3 (NIPAL3) from Pongo abelii (Sumatran orangutan).